A 517-amino-acid chain; its full sequence is Gamma-1-syntrophin (517 aa).

Residues 57-140 enclose the PDZ domain; that stretch reads TVTIRRQTVG…EVTLTVSFLK (84 aa). Residues 283–390 form the PH domain; that stretch reads QIVYMGWCEA…WERAFQTATF (108 aa).

The protein belongs to the syntrophin family. Interacts with the dystrophin protein DMD and related proteins DTNA and DTNB. Interacts with DGKZ.

The protein resides in the cytoplasm. It is found in the cytoskeleton. It localises to the nucleus. In terms of biological role, adapter protein that binds to and probably organizes the subcellular localization of a variety of proteins. May link various receptors to the actin cytoskeleton and the dystrophin glycoprotein complex. May participate in regulating the subcellular location of diacylglycerol kinase-zeta to ensure that diacylglycerol is rapidly inactivated following receptor activation. This Mus musculus (Mouse) protein is Gamma-1-syntrophin (Sntg1).